Reading from the N-terminus, the 178-residue chain is MSIIYLVINSFIFILPAYVANATPCIFGGGAPIDGGKCFFDGRRIIGNGVSWKGTFFGLFCGTITAILEGIIFNLNIFGTVAFNFNVFEWGIVGLLLSAGALFGDAIGSFIKRRLGLAQGRPAPILDQLGFIVFALLFVYPFAPVSYEMGIFLLVITPMIHLSANIIAYKLGIKDVWW.

5 helical membrane passes run Ile3 to Thr23, Thr55 to Leu75, Gly91 to Ile111, Ile125 to Val145, and Met149 to Tyr169.

It belongs to the CDP-archaeol synthase family. It depends on Mg(2+) as a cofactor.

The protein resides in the cell membrane. The enzyme catalyses 2,3-bis-O-(geranylgeranyl)-sn-glycerol 1-phosphate + CTP + H(+) = CDP-2,3-bis-O-(geranylgeranyl)-sn-glycerol + diphosphate. Its pathway is membrane lipid metabolism; glycerophospholipid metabolism. Catalyzes the formation of CDP-2,3-bis-(O-geranylgeranyl)-sn-glycerol (CDP-archaeol) from 2,3-bis-(O-geranylgeranyl)-sn-glycerol 1-phosphate (DGGGP) and CTP. This reaction is the third ether-bond-formation step in the biosynthesis of archaeal membrane lipids. This is CDP-archaeol synthase from Methanococcus aeolicus (strain ATCC BAA-1280 / DSM 17508 / OCM 812 / Nankai-3).